A 794-amino-acid chain; its full sequence is Protein transport protein SEC23 G (794 aa).

Residues C56, C59, C78, and C81 each contribute to the Zn(2+) site. The tract at residues 56 to 81 is zinc finger-like; it reads CSRCGAVLNPYARVDYQSRIWSCPFC.

This sequence belongs to the SEC23/SEC24 family. SEC23 subfamily. As to quaternary structure, component of the coat protein complex II (COPII), composed of at least five proteins: the Sec23/24 complex, the Sec13/31 complex and Sar1. Interacts with SEC24A.

It is found in the cytoplasmic vesicle. Its subcellular location is the COPII-coated vesicle membrane. The protein localises to the endoplasmic reticulum membrane. It localises to the membrane. Component of the coat protein complex II (COPII) which promotes the formation of transport vesicles from the endoplasmic reticulum (ER). The coat has two main functions, the physical deformation of the endoplasmic reticulum membrane into vesicles and the selection of cargo molecules. In Arabidopsis thaliana (Mouse-ear cress), this protein is Protein transport protein SEC23 G.